The chain runs to 261 residues: Hydroxyethylthiazole kinase (261 aa).

Met-45 provides a ligand contact to substrate. ATP contacts are provided by Arg-121 and Ser-167. Gly-194 contributes to the substrate binding site.

This sequence belongs to the Thz kinase family. Mg(2+) serves as cofactor.

It carries out the reaction 5-(2-hydroxyethyl)-4-methylthiazole + ATP = 4-methyl-5-(2-phosphooxyethyl)-thiazole + ADP + H(+). The protein operates within cofactor biosynthesis; thiamine diphosphate biosynthesis; 4-methyl-5-(2-phosphoethyl)-thiazole from 5-(2-hydroxyethyl)-4-methylthiazole: step 1/1. Its function is as follows. Catalyzes the phosphorylation of the hydroxyl group of 4-methyl-5-beta-hydroxyethylthiazole (THZ). The chain is Hydroxyethylthiazole kinase from Vibrio atlanticus (strain LGP32) (Vibrio splendidus (strain Mel32)).